The sequence spans 340 residues: MSAPIIAIDAMGGDFGPRNIVQASLACLTATPSLHLALVGQASLIEELVSAHEAVDRSRLRVIHASEAIAMDERPSQALRGKPDSSMRVALELVASGQAQACVSAGNTGALMALSRFVLKTLPGIDRPAMIAAIPTRSGHCQLLDLGANVDCSAEALYQFAVMGSVLAEILGVATPRVALLNVGTEDIKGNQQVKRAAGLLQAASGLNYIGYVEGDGLYRGEADVVVCDGFVGNVLLKSSEGLATMIAARIETLFQRNLLSRAVGALALPLLKRLQTDLAPARHNGASLLGLQGVVVKSHGSASVSGFQSAIQRAVVESRENLPQRLKGRLETMFQDGRT.

The protein belongs to the PlsX family. Homodimer. Probably interacts with PlsY.

The protein localises to the cytoplasm. The catalysed reaction is a fatty acyl-[ACP] + phosphate = an acyl phosphate + holo-[ACP]. Its pathway is lipid metabolism; phospholipid metabolism. Functionally, catalyzes the reversible formation of acyl-phosphate (acyl-PO(4)) from acyl-[acyl-carrier-protein] (acyl-ACP). This enzyme utilizes acyl-ACP as fatty acyl donor, but not acyl-CoA. This Pseudomonas syringae pv. syringae (strain B728a) protein is Phosphate acyltransferase.